Here is a 433-residue protein sequence, read N- to C-terminus: Glutamate-1-semialdehyde 2,1-aminomutase (433 aa).

The residue at position 273 (lysine 273) is an N6-(pyridoxal phosphate)lysine.

It belongs to the class-III pyridoxal-phosphate-dependent aminotransferase family. HemL subfamily. As to quaternary structure, homodimer. Pyridoxal 5'-phosphate serves as cofactor.

It is found in the cytoplasm. It catalyses the reaction (S)-4-amino-5-oxopentanoate = 5-aminolevulinate. The protein operates within porphyrin-containing compound metabolism; protoporphyrin-IX biosynthesis; 5-aminolevulinate from L-glutamyl-tRNA(Glu): step 2/2. It participates in porphyrin-containing compound metabolism; chlorophyll biosynthesis. This is Glutamate-1-semialdehyde 2,1-aminomutase (hemL) from Synechocystis sp. (strain ATCC 27184 / PCC 6803 / Kazusa).